A 205-amino-acid chain; its full sequence is Recombination protein RecR (205 aa).

The C4-type zinc finger occupies 64–79 (CRRCFNITVDELCPIC). The Toprim domain maps to 87–182 (TKICVVEEPL…RVTRPARGLP (96 aa)).

It belongs to the RecR family.

May play a role in DNA repair. It seems to be involved in an RecBC-independent recombinational process of DNA repair. It may act with RecF and RecO. This is Recombination protein RecR from Chloroflexus aggregans (strain MD-66 / DSM 9485).